The sequence spans 144 residues: Heme transporter hrg1-B (144 aa).

A run of 4 helical transmembrane segments spans residues 6–26, 38–58, 71–91, and 107–127; these read IYIS…AFIV, AMGG…IMYI, FFMF…ATFI, and FYLS…LGLY. A Di-leucine motif motif is present at residues 140–141; that stretch reads IL.

This sequence belongs to the HRG family.

It localises to the endosome membrane. Its subcellular location is the lysosome membrane. The protein resides in the cytoplasmic vesicle. The protein localises to the phagosome membrane. The catalysed reaction is heme b(in) = heme b(out). Its function is as follows. Heme transporter that regulates intracellular heme availability through the endosomal or lysosomal compartment. In macrophages, is the heme transporter for heme-iron recycling. Essential for macrophage iron homeostasis, transports heme from the phagolysosome to the cytoplasm during erythrophagocytosis (EP). The sequence is that of Heme transporter hrg1-B (slc48a1a) from Danio rerio (Zebrafish).